The sequence spans 347 residues: uncharacterized protein (347 aa).

The first 21 residues, 1–21, serve as a signal peptide directing secretion; that stretch reads MRYRIFLLFFFALLPTSLVWA.

This is an uncharacterized protein from Escherichia coli (strain K12).